A 328-amino-acid polypeptide reads, in one-letter code: Malate dehydrogenase 1 (328 aa).

12–18 (GAAGQIG) lines the NAD(+) pocket. Positions 95 and 101 each coordinate substrate. Residues asparagine 108, glutamine 115, and 132-134 (VGN) contribute to the NAD(+) site. Residues asparagine 134 and arginine 165 each contribute to the substrate site. The Proton acceptor role is filled by histidine 190.

This sequence belongs to the LDH/MDH superfamily. MDH type 2 family.

The catalysed reaction is (S)-malate + NAD(+) = oxaloacetate + NADH + H(+). Its function is as follows. Catalyzes the reversible oxidation of malate to oxaloacetate. The sequence is that of Malate dehydrogenase 1 from Albidiferax ferrireducens (strain ATCC BAA-621 / DSM 15236 / T118) (Rhodoferax ferrireducens).